The chain runs to 391 residues: F-box/kelch-repeat protein At3g16740 (391 aa).

One can recognise an F-box domain in the interval 1–47 (MVQISDLPRDLTEEVLSRIPVTSMRAVRFTCKKWNTLSKDRSFTKKH). Kelch repeat units lie at residues 104 to 154 (KIFH…YEEK) and 163 to 215 (ILRF…LKGN).

As to quaternary structure, part of a SCF (ASK-cullin-F-box) protein ligase complex. Interacts with ASK11.

The protein resides in the nucleus. It participates in protein modification; protein ubiquitination. In terms of biological role, component of SCF(ASK-cullin-F-box) E3 ubiquitin ligase complexes, which may mediate the ubiquitination and subsequent proteasomal degradation of target proteins. The protein is F-box/kelch-repeat protein At3g16740 of Arabidopsis thaliana (Mouse-ear cress).